Here is an 80-residue protein sequence, read N- to C-terminus: Small ribosomal subunit protein bS18 (80 aa).

It belongs to the bacterial ribosomal protein bS18 family. As to quaternary structure, part of the 30S ribosomal subunit. Forms a tight heterodimer with protein bS6.

In terms of biological role, binds as a heterodimer with protein bS6 to the central domain of the 16S rRNA, where it helps stabilize the platform of the 30S subunit. The protein is Small ribosomal subunit protein bS18 of Beijerinckia indica subsp. indica (strain ATCC 9039 / DSM 1715 / NCIMB 8712).